Here is a 1827-residue protein sequence, read N- to C-terminus: Sucrase-isomaltase, intestinal (1827 aa).

Residues 2 to 12 (AKRKFSGLEIT) are Cytoplasmic-facing. Ser-7 bears the Phosphoserine; by PKA mark. Residues 13–32 (LIVLFVIVFIIAIALIAVLA) traverse the membrane as a helical; Signal-anchor for type II membrane protein segment. Residues 33-1827 (TKTPAVEEVN…LDDPIEISWS (1795 aa)) lie on the Lumenal side of the membrane. Residues 39–64 (EEVNPSSSTPTTTSTTTSTSGSVSCP) are disordered. A compositionally biased stretch (low complexity) spans 43-64 (PSSSTPTTTSTTTSTSGSVSCP). Residues 61–110 (VSCPSELNEVVNERINCIPEQSPTQAICAQRNCCWRPWNNSDIPWCFFVD) form the P-type 1 domain. Intrachain disulfides connect Cys-63-Cys-94, Cys-77-Cys-93, and Cys-88-Cys-106. Residue Asn-99 is glycosylated (N-linked (GlcNAc...) asparagine). The tract at residues 110 to 1007 (DNHGYNVEGM…DLQLNPTRTR (898 aa)) is isomaltase. Residues Asp-264 and Asp-388 each contribute to the substrate site. Residues Tyr-391 and Tyr-400 each carry the sulfotyrosine modification. N-linked (GlcNAc...) asparagine glycosylation is present at Asn-455. The active-site Nucleophile; for isomaltase activity is the Asp-505. Cysteines 520 and 545 form a disulfide. Arg-588 is a substrate binding site. The For isomaltase activity role is filled by Asp-604. Cys-635 and Cys-646 form a disulfide bridge. His-662 provides a ligand contact to substrate. Asn-859, Asn-896, and Asn-904 each carry an N-linked (GlcNAc...) asparagine glycan. Residues 932–978 (DQTFLESEKITCYPDADIATQEKCTQRGCIWDTNTVNPRAPECYFPK) form the P-type 2 domain. The sucrase stretch occupies residues 1008–1827 (ITLPSEPITN…LDDPIEISWS (820 aa)). N-linked (GlcNAc...) asparagine glycans are attached at residues Asn-1235, Asn-1303, Asn-1325, Asn-1340, Asn-1354, and Asn-1368. 2 positions are modified to sulfotyrosine: Tyr-1382 and Tyr-1385. Asp-1394 functions as the Nucleophile; for sucrase activity in the catalytic mechanism. The active-site For sucrase activity is the Glu-1397. Residue Asn-1403 is glycosylated (N-linked (GlcNAc...) asparagine). Catalysis depends on Asp-1500, which acts as the Proton donor; for sucrase activity. N-linked (GlcNAc...) asparagine glycosylation is found at Asn-1535, Asn-1572, Asn-1748, Asn-1763, and Asn-1799.

The protein belongs to the glycosyl hydrolase 31 family. In terms of assembly, the resulting sucrase and isomaltase subunits stay associated with one another in a complex by non-covalent linkages. Post-translationally, the precursor is proteolytically cleaved when exposed to pancreatic proteases in the intestinal lumen. In terms of processing, N- and O-glycosylated. Sulfated.

The protein resides in the apical cell membrane. It carries out the reaction Hydrolysis of sucrose and maltose by an alpha-D-glucosidase-type action.. It catalyses the reaction Hydrolysis of (1-&gt;6)-alpha-D-glucosidic linkages in some oligosaccharides produced from starch and glycogen by alpha-amylase, and in isomaltose.. In terms of biological role, plays an important role in the final stage of carbohydrate digestion. Isomaltase activity is specific for both alpha-1,4- and alpha-1,6-oligosaccharides. The polypeptide is Sucrase-isomaltase, intestinal (SI) (Oryctolagus cuniculus (Rabbit)).